Here is a 372-residue protein sequence, read N- to C-terminus: Queuine tRNA-ribosyltransferase (372 aa).

Residue Asp-92 is the Proton acceptor of the active site. Substrate is bound by residues 92-96, Asp-146, Gln-188, and Gly-215; that span reads DSGGY. The RNA binding stretch occupies residues 246–252; sequence GIGSLRE. The active-site Nucleophile is Asp-265. Residues 270-274 form an RNA binding; important for wobble base 34 recognition region; the sequence is TRLGR. Cys-303, Cys-305, Cys-308, and His-334 together coordinate Zn(2+).

This sequence belongs to the queuine tRNA-ribosyltransferase family. As to quaternary structure, homodimer. Within each dimer, one monomer is responsible for RNA recognition and catalysis, while the other monomer binds to the replacement base PreQ1. It depends on Zn(2+) as a cofactor.

It carries out the reaction 7-aminomethyl-7-carbaguanine + guanosine(34) in tRNA = 7-aminomethyl-7-carbaguanosine(34) in tRNA + guanine. The protein operates within tRNA modification; tRNA-queuosine biosynthesis. In terms of biological role, catalyzes the base-exchange of a guanine (G) residue with the queuine precursor 7-aminomethyl-7-deazaguanine (PreQ1) at position 34 (anticodon wobble position) in tRNAs with GU(N) anticodons (tRNA-Asp, -Asn, -His and -Tyr). Catalysis occurs through a double-displacement mechanism. The nucleophile active site attacks the C1' of nucleotide 34 to detach the guanine base from the RNA, forming a covalent enzyme-RNA intermediate. The proton acceptor active site deprotonates the incoming PreQ1, allowing a nucleophilic attack on the C1' of the ribose to form the product. After dissociation, two additional enzymatic reactions on the tRNA convert PreQ1 to queuine (Q), resulting in the hypermodified nucleoside queuosine (7-(((4,5-cis-dihydroxy-2-cyclopenten-1-yl)amino)methyl)-7-deazaguanosine). In Prochlorococcus marinus (strain MIT 9312), this protein is Queuine tRNA-ribosyltransferase.